Reading from the N-terminus, the 434-residue chain is ATP-dependent RNA helicase sub2 (434 aa).

The Q motif motif lies at 59–87 (TGFRDFLLKGELLRAITDCGFEHPSEVQQ). Residues 90 to 265 (IPTAILNVDV…KKFMRNPLEV (176 aa)) enclose the Helicase ATP-binding domain. 103–110 (AKSGLGKT) lines the ATP pocket. Positions 212–215 (DECD) match the DECD box motif. The Helicase C-terminal domain occupies 293–430 (KLNELLDSLE…EYPEEGVDSS (138 aa)).

Belongs to the DEAD box helicase family. DECD subfamily.

It is found in the nucleus. The catalysed reaction is ATP + H2O = ADP + phosphate + H(+). ATP-binding RNA helicase involved in transcription elongation and required for the export of mRNA out of the nucleus. SUB2 also plays a role in pre-mRNA splicing and spliceosome assembly. May be involved in rDNA and telomeric silencing, and maintenance of genome integrity. The sequence is that of ATP-dependent RNA helicase sub2 (sub2) from Emericella nidulans (strain FGSC A4 / ATCC 38163 / CBS 112.46 / NRRL 194 / M139) (Aspergillus nidulans).